Consider the following 753-residue polypeptide: Polyadenylate-binding protein, cytoplasmic and nuclear (753 aa).

A compositionally biased stretch (low complexity) spans 1 to 43 (MSAEASTTPAAETPVNGTPETSTTPAAPAAEATAAETAAPSTS). Residues 1–49 (MSAEASTTPAAETPVNGTPETSTTPAAPAAEATAAETAAPSTSQPHSAS) form a disordered region. 4 RRM domains span residues 48–126 (ASLY…WSQR), 136–213 (GNVF…HHIS), 229–306 (TNVY…RAQK), and 332–460 (VNLY…LAQR). 3 disordered regions span residues 363–417 (VMRD…SDKK), 607–649 (RGPG…PAAG), and 727–753 (GTEGEAAGEAPKPKEAATEESTEENKS). Residues 376 to 417 (DSDKEKKEESKEEKPEAAEKTEEAAKESGDDQDKENKKSDKK) are compositionally biased toward basic and acidic residues. Over residues 607 to 619 (RGPGYGQGRGGVP) the composition is skewed to gly residues. Residues 633 to 649 (QNAQPAAGRGEEAPAAG) are compositionally biased toward low complexity. A PABC domain is found at 647 to 724 (AAGLTAQSLA…ALSVYDEYMK (78 aa)). The span at 737 to 753 (PKPKEAATEESTEENKS) shows a compositional bias: basic and acidic residues.

It belongs to the polyadenylate-binding protein type-1 family.

The protein resides in the cytoplasm. It is found in the nucleus. Its function is as follows. Binds the poly(A) tail of mRNA. Appears to be an important mediator of the multiple roles of the poly(A) tail in mRNA biogenesis, stability and translation. In the nucleus, involved in both mRNA cleavage and polyadenylation. Is also required for efficient mRNA export to the cytoplasm. Acts in concert with a poly(A)-specific nuclease (PAN) to affect poly(A) tail shortening, which may occur concomitantly with either nucleocytoplasmic mRNA transport or translational initiation. In the cytoplasm, stimulates translation initiation and regulates mRNA decay through translation termination-coupled poly(A) shortening, probably mediated by PAN. The protein is Polyadenylate-binding protein, cytoplasmic and nuclear (pab1) of Aspergillus terreus (strain NIH 2624 / FGSC A1156).